We begin with the raw amino-acid sequence, 143 residues long: Ribosome-binding factor A (143 aa).

The segment covering 119–129 (AVGDKPAVPRD) has biased composition (basic and acidic residues). The tract at residues 119 to 143 (AVGDKPAVPRDDNDDPVSDNPERDA) is disordered.

Belongs to the RbfA family. As to quaternary structure, monomer. Binds 30S ribosomal subunits, but not 50S ribosomal subunits or 70S ribosomes.

It localises to the cytoplasm. Its function is as follows. One of several proteins that assist in the late maturation steps of the functional core of the 30S ribosomal subunit. Associates with free 30S ribosomal subunits (but not with 30S subunits that are part of 70S ribosomes or polysomes). Required for efficient processing of 16S rRNA. May interact with the 5'-terminal helix region of 16S rRNA. The chain is Ribosome-binding factor A from Marinobacter nauticus (strain ATCC 700491 / DSM 11845 / VT8) (Marinobacter aquaeolei).